Consider the following 1150-residue polypeptide: ATP-dependent helicase/deoxyribonuclease subunit B (1150 aa).

8–15 (GRAGSGKS) is an ATP binding site. Residues cysteine 786, cysteine 1106, cysteine 1109, and cysteine 1115 each coordinate [4Fe-4S] cluster.

It belongs to the helicase family. AddB/RexB type 1 subfamily. As to quaternary structure, heterodimer of AddA and AddB. Requires Mg(2+) as cofactor. It depends on [4Fe-4S] cluster as a cofactor.

Its function is as follows. The heterodimer acts as both an ATP-dependent DNA helicase and an ATP-dependent, dual-direction single-stranded exonuclease. Recognizes the chi site generating a DNA molecule suitable for the initiation of homologous recombination. The AddB subunit has 5' -&gt; 3' nuclease activity but not helicase activity. This chain is ATP-dependent helicase/deoxyribonuclease subunit B, found in Clostridium botulinum (strain Hall / ATCC 3502 / NCTC 13319 / Type A).